The sequence spans 674 residues: Leucine-rich repeat transmembrane protein FLRT1 (674 aa).

Positions 1–51 are cleaved as a signal peptide; that stretch reads MVVAHSAATATTTPAATVTATVVMTTATMDLRDWLFLCYGLIAFLTEVIDS. Residues 52-552 are Extracellular-facing; sequence TTCPSVCRCD…QNAGPMAGLP (501 aa). Cystine bridges form between cysteine 54-cysteine 60 and cysteine 58-cysteine 67. The region spanning 54-80 is the LRRNT domain; that stretch reads CPSVCRCDNGFIYCNDRGLTSIPSDIP. LRR repeat units lie at residues 81–105, 106–126, 127–149, 151–175, 176–197, 198–220, 222–246, 247–269, 270–292, and 293–316; these read DDATTLYLQNNQINNAGIPQDLKTK, VKVQVIYLYENDLDEFPINLP, RSLRELHLQDNNVRTIARDSLAR, PLLEKLHLDDNSVSTVSIEEDAFAD, SKQLKLLFLSRNHLSSIPSGLP, HTLEELRLDDNRISTIPLHAFKG, NSLRRLVLDGNLLANQRIADDTFSR, LQNLTELSLVRNSLAAPPLNLPS, AHLQKLYLQDNAISHIPYNTLAK, and MRELERLDLSNNNLTTLPRGLFDD. N-linked (GlcNAc...) asparagine glycosylation occurs at asparagine 305. One can recognise an LRRCT domain in the interval 328–379; sequence NPWFCGCNLMWLRDWVRARAAVVNVRGLMCQGPEKVRGMAIKDITSEMDECF. Residues cysteine 332 and cysteine 357 are joined by a disulfide bond. The 96-residue stretch at 437–532 folds into the Fibronectin type-III domain; that stretch reads KTLVIQVKPL…VCAKAETADS (96 aa). The helical transmembrane segment at 553 to 573 threads the bilayer; that stretch reads LAGIIGGAVALVFLFLVLGAI. At 574–674 the chain is on the cytoplasmic side; sequence CWYVHRAGEL…GIPDVDYSYT (101 aa). 3 positions are modified to phosphotyrosine: tyrosine 600, tyrosine 633, and tyrosine 671.

In terms of assembly, interacts with FGFR1. Interacts (via extracellular domain) with ADGRL1/LPHN1 and ADGRL3 (via olfactomedin-like domain). Phosphorylated in response to FGFR1 signaling, but is not a direct substrate of FGFR1 or SRC. A mutant where the Tyr phosphorylation sites have been replaced by Phe displays constitutive FGFR1-dependent activation of downstream MAP kinases. Post-translationally, N-glycosylated. In terms of processing, proteolytic cleavage in the juxtamembrane region gives rise to a soluble ectodomain. In terms of tissue distribution, detected in brain (at protein level).

The protein resides in the cell membrane. It localises to the endoplasmic reticulum membrane. Its subcellular location is the cytoplasmic vesicle membrane. It is found in the cytoplasm. The protein localises to the perinuclear region. The protein resides in the cell junction. It localises to the focal adhesion. Its subcellular location is the secreted. It is found in the cell projection. The protein localises to the neuron projection. Its function is as follows. Plays a role in fibroblast growth factor-mediated signaling cascades that lead to the activation of MAP kinases. Promotes neurite outgrowth via FGFR1-mediated activation of downstream MAP kinases. Promotes an increase both in neurite number and in neurite length. May play a role in cell-cell adhesion and cell guidance via its interaction with ADGRL1/LPHN1 and ADGRL3. The polypeptide is Leucine-rich repeat transmembrane protein FLRT1 (Mus musculus (Mouse)).